Reading from the N-terminus, the 703-residue chain is Arf-GAP with GTPase, ANK repeat and PH domain-containing protein 9 (703 aa).

Disordered regions lie at residues 249–287 (KRNG…TPTP), 299–323 (FTSE…TIGS), and 427–449 (SSTT…KHLK). Positions 271 to 286 (QEDPQFSVPPTANTPT) are enriched in polar residues. Residues 303 to 318 (KGSDPDKERKAPENHA) are compositionally biased toward basic and acidic residues. The PH domain maps to 327–488 (IPIKQGMLLK…WVQAIQSQIL (162 aa)). The region spanning 509–629 (AMALQSIQNM…LFLAPLPCTE (121 aa)) is the Arf-GAP domain. The segment at 524 to 547 (CVDCETQNPKWASLNLGVLMCIEC) adopts a C4-type zinc-finger fold. Residues 631–700 (SLGQQLLRAT…WTSWPEMPTG (70 aa)) form an ANK repeat.

It belongs to the centaurin gamma-like family.

Functionally, putative GTPase-activating protein. The sequence is that of Arf-GAP with GTPase, ANK repeat and PH domain-containing protein 9 (AGAP9) from Homo sapiens (Human).